Consider the following 1434-residue polypeptide: Probable ATP-dependent RNA helicase spindle-E (1434 aa).

Residues 126–295 (INAINENPVV…FANESSAPPV (170 aa)) enclose the Helicase ATP-binding domain. 139 to 146 (GETGCGKT) is a binding site for ATP. The DEAH box motif lies at 241–244 (DEVH). Residues 356–527 (TGKSYNQSLR…NCVLKAKELK (172 aa)) enclose the Helicase C-terminal domain. The Tudor domain maps to 936-999 (AGAITKGLML…RLMSQDLLRH (64 aa)).

The protein belongs to the DEAD box helicase family. DEAH subfamily.

The protein localises to the cytoplasm. It carries out the reaction ATP + H2O = ADP + phosphate + H(+). Probable ATP-binding RNA helicase which plays a central role during spermatogenesis and oogenesis by repressing transposable elements and preventing their mobilization, which is essential for the germline integrity. Acts via the piRNA metabolic process, which mediates the repression of transposable elements during meiosis by forming complexes composed of piRNAs and Piwi and govern the methylation and subsequent repression of transposons. Involved in the repression of LTR retrotransposon copia. Also involved in telomere regulation by repressing specialized telomeric retroelements HeT-A, TAHRE, and TART; Drosophila telomeres being maintained by transposition of specialized telomeric retroelements. Involved in telomeric trans-silencing, a repression mechanism by which a transposon or a transgene inserted in subtelomeric heterochromatin has the capacity to repress in trans in the female germline, a homologous transposon, or transgene located in euchromatin. Involved in the repression of testis-expressed Stellate genes by the homologous Su(Ste) repeats. Required for anteroposterior and dorsoventral axis formation during oogenesis. The chain is Probable ATP-dependent RNA helicase spindle-E (spn-E) from Drosophila persimilis (Fruit fly).